Consider the following 750-residue polypeptide: MGNNKSGSEDNHKVWEVNESSKCPFMGGALNKTAGKGTSNRDWWPNQLNLNILRQNSSLINPMDDGFNYAEAFKSLDLNAVKQDIYDLMTNSQDWWPADYGHYGPFFIRMAWHSAGTYRIGDGRGGAGSGQQRFAPLNSWPDNANLDKARLLLWPVKKKYGKNLSWADLLVLAGNCAHESMGLKMFGFAGGREDVWEPAQDVYWGAETEWLNNDERYAGEELENPLGAAHMGLIYVNPEGHNGNPDPVEAASYIRETFGRMAMNDYETVALIAGGHTFGKTHGAADAEEYVEAEPAAAGIESQGLGWKNTFGTGNGADTITSGIEGAWTDTPTKWSNKYFDNLFKYDWECIKGPGGAYQWQPKDNAGAGTVPDAHDPDKKHAPFMLTTDLSLKMDPEYEKISRHFYENPDEFADAYSRAWFKLTHRDMGPIERYLGPEVPKEELLWQDPIPKVDHEIINDSDIASLKNKILNTGLSVQELVTTAWGSASTFRGSDKRGGANGGRIRLAPQNGWEVNNPKQLGKVIDTLEKIQQDFNESQSGSKKVSIADLIVLAGCVGVEKAAKTAGHELKVPFSPGRADASQEQTDVEAFEPLEPNADGFRNYFRNRDHVSASAEELLVDRAQLLTLTVPQMTVLLGGMRAMGANYDGSKKGVFTDRPGQLTNDFFKNILEMGLTWKSSSDSETEFDGSDRKTGDVKWTGSRADLIFGSNSELRAIAEVYGTDDVEAKFVKDFVKAWDKVMNLDRYDLK.

The tryptophyl-tyrosyl-methioninium (Trp-Tyr) (with M-261) cross-link spans 112 to 235 (WHSAGTYRIG…LGAAHMGLIY (124 aa)). His-113 functions as the Proton acceptor in the catalytic mechanism. The tryptophyl-tyrosyl-methioninium (Tyr-Met) (with W-112) cross-link spans 235–261 (YVNPEGHNGNPDPVEAASYIRETFGRM). His-276 contacts heme b.

It belongs to the peroxidase family. Peroxidase/catalase subfamily. In terms of assembly, homodimer or homotetramer. The cofactor is heme b. Post-translationally, formation of the three residue Trp-Tyr-Met cross-link is important for the catalase, but not the peroxidase activity of the enzyme.

It catalyses the reaction H2O2 + AH2 = A + 2 H2O. The enzyme catalyses 2 H2O2 = O2 + 2 H2O. Functionally, bifunctional enzyme with both catalase and broad-spectrum peroxidase activity. This chain is Catalase-peroxidase, found in Christiangramia forsetii (strain DSM 17595 / CGMCC 1.15422 / KT0803) (Gramella forsetii).